Consider the following 94-residue polypeptide: Conotoxin Im026 (94 aa).

Positions 1 to 24 (MRLTTMHSVILMLLLVFAFDNVDG) are cleaved as a signal peptide. Residues 25 to 59 (DEPGQTARDVDNRNFMSILRSEGKPVHFLRAIKKR) constitute a propeptide that is removed on maturation.

Contains 4 disulfide bonds. In terms of tissue distribution, expressed by the venom duct.

The protein resides in the secreted. Probable neurotoxin. The sequence is that of Conotoxin Im026 from Conus imperialis (Imperial cone).